The primary structure comprises 372 residues: 4-hydroxy-3-methylbut-2-en-1-yl diphosphate synthase (flavodoxin) (372 aa).

4 residues coordinate [4Fe-4S] cluster: C270, C273, C305, and E312.

It belongs to the IspG family. The cofactor is [4Fe-4S] cluster.

It catalyses the reaction (2E)-4-hydroxy-3-methylbut-2-enyl diphosphate + oxidized [flavodoxin] + H2O + 2 H(+) = 2-C-methyl-D-erythritol 2,4-cyclic diphosphate + reduced [flavodoxin]. The protein operates within isoprenoid biosynthesis; isopentenyl diphosphate biosynthesis via DXP pathway; isopentenyl diphosphate from 1-deoxy-D-xylulose 5-phosphate: step 5/6. In terms of biological role, converts 2C-methyl-D-erythritol 2,4-cyclodiphosphate (ME-2,4cPP) into 1-hydroxy-2-methyl-2-(E)-butenyl 4-diphosphate. The chain is 4-hydroxy-3-methylbut-2-en-1-yl diphosphate synthase (flavodoxin) from Marinobacter nauticus (strain ATCC 700491 / DSM 11845 / VT8) (Marinobacter aquaeolei).